A 705-amino-acid polypeptide reads, in one-letter code: Ribosomal RNA large subunit methyltransferase K/L (705 aa).

Positions 43–154 constitute a THUMP domain; that stretch reads LLYQSLLWSR…RDTASVALDL (112 aa).

Belongs to the methyltransferase superfamily. RlmKL family.

It is found in the cytoplasm. It catalyses the reaction guanosine(2445) in 23S rRNA + S-adenosyl-L-methionine = N(2)-methylguanosine(2445) in 23S rRNA + S-adenosyl-L-homocysteine + H(+). It carries out the reaction guanosine(2069) in 23S rRNA + S-adenosyl-L-methionine = N(2)-methylguanosine(2069) in 23S rRNA + S-adenosyl-L-homocysteine + H(+). Specifically methylates the guanine in position 2445 (m2G2445) and the guanine in position 2069 (m7G2069) of 23S rRNA. This Pectobacterium atrosepticum (strain SCRI 1043 / ATCC BAA-672) (Erwinia carotovora subsp. atroseptica) protein is Ribosomal RNA large subunit methyltransferase K/L.